A 75-amino-acid chain; its full sequence is Sec-independent protein translocase protein TatA (75 aa).

A helical transmembrane segment spans residues 1-21 (MGSFSIWHWLVVLAIVLLVFG). Positions 40 to 75 (KKGMRDEDKPNAQLGDESRSQDASRTAQDEHDRTPR) are disordered.

This sequence belongs to the TatA/E family. The Tat system comprises two distinct complexes: a TatABC complex, containing multiple copies of TatA, TatB and TatC subunits, and a separate TatA complex, containing only TatA subunits. Substrates initially bind to the TatABC complex, which probably triggers association of the separate TatA complex to form the active translocon.

Its subcellular location is the cell inner membrane. In terms of biological role, part of the twin-arginine translocation (Tat) system that transports large folded proteins containing a characteristic twin-arginine motif in their signal peptide across membranes. TatA could form the protein-conducting channel of the Tat system. This Stenotrophomonas maltophilia (strain R551-3) protein is Sec-independent protein translocase protein TatA.